Consider the following 557-residue polypeptide: NADP-dependent malic enzyme (557 aa).

The active-site Proton donor is the Tyr88. Arg141 provides a ligand contact to NADP(+). Lys159 (proton acceptor) is an active-site residue. Glu231, Asp232, and Asp255 together coordinate a divalent metal cation. Asp255 is a binding site for NADP(+). At Ser322 the chain carries Phosphoserine. Asn394 serves as a coordination point for NADP(+).

It belongs to the malic enzymes family. Homotetramer. Requires Mg(2+) as cofactor. It depends on Mn(2+) as a cofactor.

The protein resides in the cytoplasm. The enzyme catalyses (S)-malate + NADP(+) = pyruvate + CO2 + NADPH. It catalyses the reaction oxaloacetate + H(+) = pyruvate + CO2. Catalyzes the oxidative decarboxylation of (S)-malate in the presence of NADP(+) and divalent metal ions, and decarboxylation of oxaloacetate. The chain is NADP-dependent malic enzyme (ME1) from Sus scrofa (Pig).